Consider the following 233-residue polypeptide: 2,3-bisphosphoglycerate-dependent phosphoglycerate mutase (233 aa).

Substrate is bound by residues 8-15 (RHGQSLWN), 21-22 (TG), R60, 116-119 (ERYY), K127, 143-144 (RR), and 187-188 (GN). The active-site Tele-phosphohistidine intermediate is the H9. Residue E116 is the Proton donor/acceptor of the active site.

It belongs to the phosphoglycerate mutase family. BPG-dependent PGAM subfamily.

It catalyses the reaction (2R)-2-phosphoglycerate = (2R)-3-phosphoglycerate. It participates in carbohydrate degradation; glycolysis; pyruvate from D-glyceraldehyde 3-phosphate: step 3/5. In terms of biological role, catalyzes the interconversion of 2-phosphoglycerate and 3-phosphoglycerate. The polypeptide is 2,3-bisphosphoglycerate-dependent phosphoglycerate mutase (Gloeothece citriformis (strain PCC 7424) (Cyanothece sp. (strain PCC 7424))).